Reading from the N-terminus, the 381-residue chain is Dof zinc finger protein 2 (381 aa).

Residues 19–81 (MLMGANPNPN…ARPQKEKALN (63 aa)) are disordered. Low complexity-rich tracts occupy residues 23–32 (ANPNPNGSSN) and 40–59 (SAAS…AAGA). Residues 68 to 79 (TERRARPQKEKA) are compositionally biased toward basic and acidic residues. Residues 80–134 (LNCPRCNSTNTKFCYYNNYSLQQPRYFCKTCRRYWTEGGSLRNVPVGGGSRKNKR) form a Dof-type zinc finger. Residues Cys-82, Cys-85, Cys-107, and Cys-110 each contribute to the Zn(2+) site. The interval 329-349 (AGDANSGGDHQYDHGKNQGGG) is disordered.

The protein resides in the nucleus. Transcription factor that may transactivate seed storage protein genes in developing seeds. The polypeptide is Dof zinc finger protein 2 (Oryza sativa subsp. japonica (Rice)).